We begin with the raw amino-acid sequence, 694 residues long: Glycine--tRNA ligase beta subunit (694 aa).

The protein belongs to the class-II aminoacyl-tRNA synthetase family. As to quaternary structure, tetramer of two alpha and two beta subunits.

It localises to the cytoplasm. The enzyme catalyses tRNA(Gly) + glycine + ATP = glycyl-tRNA(Gly) + AMP + diphosphate. This is Glycine--tRNA ligase beta subunit from Acidithiobacillus ferrooxidans (strain ATCC 23270 / DSM 14882 / CIP 104768 / NCIMB 8455) (Ferrobacillus ferrooxidans (strain ATCC 23270)).